Consider the following 78-residue polypeptide: MNAPDKLPPETRQPVSGYLWGALAVLTCPCHLPILAAVLAGTTAGAFLGEHWGVAALALTGLFVLAVTRLLRAFRGGS.

The next 2 helical transmembrane spans lie at L19 to L39 and F47 to V67.

It localises to the cell inner membrane. Functionally, broad mercury transporter that mediates the transport of both CH(3)Hg(I) and Hg(II) across the membrane. This chain is Broad mercury transporter MerE, found in Shigella flexneri.